Consider the following 432-residue polypeptide: Adenylosuccinate synthetase (432 aa).

GTP-binding positions include 13-19 (GDEGKGK) and 41-43 (GHT). The Proton acceptor role is filled by Asp-14. Residues Asp-14 and Gly-41 each contribute to the Mg(2+) site. IMP-binding positions include 14–17 (DEGK), 39–42 (NAGH), Thr-131, Arg-145, Gln-226, Thr-241, and Arg-305. His-42 serves as the catalytic Proton donor. 301-307 (SVTGRAR) lines the substrate pocket. GTP is bound by residues Arg-307, 333–335 (KLD), and 416–418 (STG).

This sequence belongs to the adenylosuccinate synthetase family. Homodimer. The cofactor is Mg(2+).

It is found in the cytoplasm. It catalyses the reaction IMP + L-aspartate + GTP = N(6)-(1,2-dicarboxyethyl)-AMP + GDP + phosphate + 2 H(+). The protein operates within purine metabolism; AMP biosynthesis via de novo pathway; AMP from IMP: step 1/2. Its function is as follows. Plays an important role in the de novo pathway of purine nucleotide biosynthesis. Catalyzes the first committed step in the biosynthesis of AMP from IMP. The protein is Adenylosuccinate synthetase of Neisseria meningitidis serogroup A / serotype 4A (strain DSM 15465 / Z2491).